Here is a 292-residue protein sequence, read N- to C-terminus: NAD kinase (292 aa).

Catalysis depends on D73, which acts as the Proton acceptor. NAD(+)-binding positions include 73 to 74 (DG), 147 to 148 (NE), H158, R175, D177, 188 to 193 (TAYSLS), and Q247.

The protein belongs to the NAD kinase family. The cofactor is a divalent metal cation.

The protein localises to the cytoplasm. It carries out the reaction NAD(+) + ATP = ADP + NADP(+) + H(+). In terms of biological role, involved in the regulation of the intracellular balance of NAD and NADP, and is a key enzyme in the biosynthesis of NADP. Catalyzes specifically the phosphorylation on 2'-hydroxyl of the adenosine moiety of NAD to yield NADP. The polypeptide is NAD kinase (Escherichia coli O7:K1 (strain IAI39 / ExPEC)).